A 364-amino-acid chain; its full sequence is Protein LATERAL BRANCHING OXIDOREDUCTASE 1 (364 aa).

The Fe2OG dioxygenase domain occupies 203–312 (RFEEMFGEAV…RLTIVTFYAP (110 aa)). Fe cation-binding residues include histidine 235, aspartate 237, and histidine 293. Position 303 (arginine 303) interacts with 2-oxoglutarate.

This sequence belongs to the iron/ascorbate-dependent oxidoreductase family. In terms of assembly, monomer. Requires Fe(2+) as cofactor. L-ascorbate serves as cofactor. As to expression, expressed in the vasculature throughout the plant and in the buds and root tips.

It localises to the cytoplasm. The catalysed reaction is (11R)-methyl carlactonoate + 2-oxoglutarate + O2 = (11R)-hydroxymethyl carlactonoate + succinate + CO2. Oxoglutarate-dependent dioxygenase involved in the biosynthesis of strigolactone natural products, bioactive compounds promoting plant fitness and soil microbe interactions, but preventing shoot branching. Catalyzes the hydroxylation of (11R)-methyl carlactonoate (MeCLA) to produce (11R)-hydroxymethyl carlactonoate (1'-HO-MeCLA) in final stages of strigolactone biosynthesis, downstream of MAX1 and CLAMT. The sequence is that of Protein LATERAL BRANCHING OXIDOREDUCTASE 1 from Arabidopsis thaliana (Mouse-ear cress).